We begin with the raw amino-acid sequence, 528 residues long: Phosphoenolpyruvate carboxykinase (ATP) (528 aa).

R56, Y192, and K198 together coordinate substrate. ATP is bound by residues K198, H217, and 233 to 241; that span reads GLSGTGKTT. Mn(2+) contacts are provided by K198 and H217. D254 contributes to the Mn(2+) binding site. ATP is bound by residues E282, R319, and T444. Substrate is bound at residue R319.

It belongs to the phosphoenolpyruvate carboxykinase (ATP) family. Requires Mn(2+) as cofactor.

It is found in the cytoplasm. The catalysed reaction is oxaloacetate + ATP = phosphoenolpyruvate + ADP + CO2. The protein operates within carbohydrate biosynthesis; gluconeogenesis. Involved in the gluconeogenesis. Catalyzes the conversion of oxaloacetate (OAA) to phosphoenolpyruvate (PEP) through direct phosphoryl transfer between the nucleoside triphosphate and OAA. The sequence is that of Phosphoenolpyruvate carboxykinase (ATP) from Bacillus cereus (strain AH187).